The chain runs to 358 residues: Histidinol-phosphate aminotransferase (358 aa).

At Lys-211 the chain carries N6-(pyridoxal phosphate)lysine.

Belongs to the class-II pyridoxal-phosphate-dependent aminotransferase family. Histidinol-phosphate aminotransferase subfamily. As to quaternary structure, homodimer. Pyridoxal 5'-phosphate serves as cofactor.

The catalysed reaction is L-histidinol phosphate + 2-oxoglutarate = 3-(imidazol-4-yl)-2-oxopropyl phosphate + L-glutamate. The protein operates within amino-acid biosynthesis; L-histidine biosynthesis; L-histidine from 5-phospho-alpha-D-ribose 1-diphosphate: step 7/9. The sequence is that of Histidinol-phosphate aminotransferase from Blochmanniella pennsylvanica (strain BPEN).